The sequence spans 2157 residues: Unconventional myosin-IXb (2157 aa).

Ser-2 is subject to N-acetylserine. A Ras-associating domain is found at 15-114 (AAYHLHIYPQ…YYFLLQERNA (100 aa)). In terms of domain architecture, Myosin motor spans 146-953 (ADFDDLCNLP…ERQALQETLH (808 aa)). Residue 239–246 (GESGSGKT) participates in ATP binding. The disordered stretch occupies residues 709–734 (AEKAAGMSSPGAQSHPEELPRGASTP). Phosphoserine is present on residues Ser-716 and Ser-717. Positions 844–855 (KAEPFFIRCIRS) are actin-binding. Positions 940–1044 (LKETERQALQ…CRGHLQRKSF (105 aa)) are neck or regulatory domain. IQ domains follow at residues 957–977 (VRKILLLQSWFRMVLERRHFL), 979–1000 (MKRAAVTIQACWRSYRVRRALE), 1001–1023 (RTQAAVYLQASWRGYWQRKLYRH), and 1024–1053 (QKQSIIRLQSLCRGHLQRKSFSQMISEKQK). Ser-1045 bears the Phosphoserine mark. The tract at residues 1045–2157 (SQMISEKQKA…LPPASGQTNG (1113 aa)) is tail. The stretch at 1046–1071 (QMISEKQKAEEKEREALEAARAGAEE) forms a coiled coil. Disordered regions lie at residues 1046-1298 (QMIS…TQIQ), 1320-1410 (AAAS…GSQV), and 1455-1484 (GLEAPSGQQHRHAAGEKRTKEPGGKGKKNR). Basic and acidic residues-rich tracts occupy residues 1050 to 1063 (EKQKAEEKEREALE), 1109 to 1122 (SPLEHSSPEKEAPS), 1136 to 1160 (ESHEKVPSSREKRESRRQRGLEHVK), 1168 to 1183 (SCKEESALREPSRRVT), and 1191 to 1201 (LEDKKESREDE). 3 positions are modified to phosphoserine: Ser-1114, Ser-1115, and Ser-1122. The span at 1211 to 1222 (ENTSQKQPTEQP) shows a compositional bias: polar residues. Ser-1242, Ser-1253, Ser-1261, and Ser-1267 each carry phosphoserine. Thr-1271 is subject to Phosphothreonine. Residues Ser-1290, Ser-1323, and Ser-1331 each carry the phosphoserine modification. Position 1346 is a phosphothreonine (Thr-1346). Phosphoserine is present on residues Ser-1354, Ser-1356, and Ser-1405. The span at 1467–1478 (AAGEKRTKEPGG) shows a compositional bias: basic and acidic residues. The segment at 1632-1681 (GHVFASYQVSIPQSCEQCLSYIWLMDKALLCSVCKMTCHKKCVHKIQSHC) adopts a Phorbol-ester/DAG-type zinc-finger fold. Residues 1703–1888 (DSLTSDKASV…MLIKEQMRKY (186 aa)) form the Rho-GAP domain. An interaction with RHOA region spans residues 1739-1744 (AANRTR). Residues 1880 to 1901 (LIKEQMRKYKVKMEEISQLEAA) adopt a coiled-coil conformation. A phosphoserine mark is found at Ser-1926, Ser-1972, Ser-1992, and Ser-1999. Positions 1959 to 1989 (EDREKEILIERIQSIKEEKEDITYRLPELDP) form a coiled coil. Basic and acidic residues predominate over residues 1980–1993 (ITYRLPELDPRGSD). The tract at residues 1980–2157 (ITYRLPELDP…LPPASGQTNG (178 aa)) is disordered. Thr-2005 carries the post-translational modification Phosphothreonine. Pro residues predominate over residues 2021-2037 (PPAPALPCPGAPTPSPL). Residue Ser-2050 is modified to Phosphoserine. Residues 2081 to 2093 (PRWAPGAREAAAP) show a composition bias toward low complexity. Basic and acidic residues predominate over residues 2095–2106 (RRREPPARRPDQ). Ser-2141 carries the post-translational modification Phosphoserine.

Belongs to the TRAFAC class myosin-kinesin ATPase superfamily. Myosin family. In terms of assembly, interacts (via IQ domains) with CALM. Interacts with RHOA. Interacts (via Rho-GAP domain) with ROBO1; this inhibits the interaction with RHOA and the stimulation of RHOA GTPase activity, and thereby increases the levels of active RHOA. Detected in peripheral blood leukocytes (at protein level). Expressed predominantly in peripheral blood leukocytes and at lower levels, in thymus, spleen, testis, prostate, ovary, brain, small intestine and lung.

It localises to the cytoplasm. It is found in the cell cortex. The protein localises to the perinuclear region. The protein resides in the cytoskeleton. Its function is as follows. Myosins are actin-based motor molecules with ATPase activity. Unconventional myosins serve in intracellular movements. Binds actin with high affinity both in the absence and presence of ATP and its mechanochemical activity is inhibited by calcium ions. Also acts as a GTPase activator for RHOA. Plays a role in the regulation of cell migration via its role as RHOA GTPase activator. This is regulated by its interaction with the SLIT2 receptor ROBO1; interaction with ROBO1 impairs interaction with RHOA and subsequent activation of RHOA GTPase activity, and thereby leads to increased levels of active, GTP-bound RHOA. In Homo sapiens (Human), this protein is Unconventional myosin-IXb (MYO9B).